The sequence spans 624 residues: MSDNQSWNSSGSEEDPETESGPPVERCGVLSKWTNYIHGWQDRWVVLKNNTLSYYKSEDETEYGCRGSICLSKAVITPHDFDECRFDISVNDSVWYLRAQDPEHRQQWVDAIEQHKTESGYGSESSLRRHGSMVSLVSGASGYSATSTSSFKKGHSLREKLAEMETFRDILCRQVDTLQKYFDVCADAVSKDELQRDKVVEDDEDDFPTTRSDGDFLHNTNGNKEKLFPHVTPKGINGIDFKGEAITFKATTAGILATLSHCIELMVKREESWQKRHDREVEKRRRVEEAYKNVMEELKKKPRFGGPDYEEGPNSLINEEEFFDAVEAALDRQDKIEEQSQSEKVRLHWPTSLPSGDTFSSVGTHRFVQKPYSRSSSMSSIDLVSASDDVHRFSSQVEEMVQNHMNYSLQDVGGDANWQLVVEEGEMKVYRREVEENGIVLDPLKATHAVKGVTGHEVCNYFWNVDVRNDWETTIENFHVVETLADNAIIVYQTHKRVWPASQRDVLYLSAIRKIPALTENDPETWIVCNFSVDHDSAPLNNRCVRAKINIAMICQTLVSPPEGDQEISRDNILCKITYVANVNPGGWAPASVLRAVAKREYPKFLKRFTSYVQEKTAGKPILF.

Over residues 1 to 11 (MSDNQSWNSSG) the composition is skewed to polar residues. A disordered region spans residues 1–24 (MSDNQSWNSSGSEEDPETESGPPV). The 95-residue stretch at 23–117 (PVERCGVLSK…WVDAIEQHKT (95 aa)) folds into the PH domain. Residues Ser-126, Ser-132, and Ser-135 each carry the phosphoserine modification. Residues 202–221 (DDEDDFPTTRSDGDFLHNTN) are disordered. The stretch at 263–303 (IELMVKREESWQKRHDREVEKRRRVEEAYKNVMEELKKKPR) forms a coiled coil. Ser-315 carries the post-translational modification Phosphoserine. The FFAT signature appears at 321–327 (EFFDAVE). Tyr-372 carries the phosphotyrosine modification. 3 positions are modified to phosphoserine: Ser-373, Ser-377, and Ser-380. Positions 389–618 (DVHRFSSQVE…FTSYVQEKTA (230 aa)) constitute an START domain. Residues Glu-472, Gln-493, Asn-530, and Tyr-579 each contribute to the an N-acylsphing-4-enine site.

In terms of assembly, interacts with VAPA and VAPB. Interaction with VAPB is less efficient than with VAPA. Interacts (via FFAT motif) with MOSPD2 (via MSP domain). Phosphorylation on Ser-132 decreases the affinity toward phosphatidylinositol 4-phosphate at Golgi membranes and reduces ceramide transfer activity. Inactivated by hyperphosphorylation of serine residues by CSNK1G2/CK1 that triggers dissociation from the Golgi complex, thus down-regulating ER-to-Golgi transport of ceramide and sphingomyelin synthesis.

Its subcellular location is the cytoplasm. It is found in the golgi apparatus. It localises to the endoplasmic reticulum. It carries out the reaction N-hexadecanoylsphing-4-enine(in) = N-hexadecanoylsphing-4-enine(out). Functionally, shelters ceramides and diacylglycerol lipids inside its START domain and mediates the intracellular trafficking of ceramides and diacylglycerol lipids in a non-vesicular manner. The protein is Ceramide transfer protein (Cert1) of Mus musculus (Mouse).